A 212-amino-acid chain; its full sequence is Uracil phosphoribosyltransferase (212 aa).

5-phospho-alpha-D-ribose 1-diphosphate is bound by residues Arg78, Arg103, and 130–138 (DPMLATGSS). Residues Ile193 and 198–200 (GDA) each bind uracil. 5-phospho-alpha-D-ribose 1-diphosphate is bound at residue Asp199.

It belongs to the UPRTase family. Mg(2+) is required as a cofactor.

It catalyses the reaction UMP + diphosphate = 5-phospho-alpha-D-ribose 1-diphosphate + uracil. Its pathway is pyrimidine metabolism; UMP biosynthesis via salvage pathway; UMP from uracil: step 1/1. With respect to regulation, allosterically activated by GTP. In terms of biological role, catalyzes the conversion of uracil and 5-phospho-alpha-D-ribose 1-diphosphate (PRPP) to UMP and diphosphate. This Pseudomonas fluorescens (strain Pf0-1) protein is Uracil phosphoribosyltransferase.